The primary structure comprises 386 residues: Ribonucleoside-diphosphate reductase subunit M2 (386 aa).

S20 bears the Phosphoserine mark. A Phosphothreonine modification is found at T33. The Cy motif lies at 49–51 (RRI). Fe cation contacts are provided by D139, E170, and H173. The active site involves Y177. Fe cation is bound by residues E233, E267, and H270.

This sequence belongs to the ribonucleoside diphosphate reductase small chain family. Heterodimer of a large and a small subunit. Interacts (via Cy motif and when phosphorylated at Thr-33) with CCNF; the interaction occurs exclusively in G2 and early M. Requires Fe cation as cofactor. Phosphorylation on Ser-20 relieves the inhibitory effect on Wnt signaling. Phosphorylated on Thr-33 by CDK1 and CDK2; predominantly in G2 and M phase. In terms of processing, ubiquitinated by the SCF(CCNF) E3 ubiquitin-protein ligase complex; leading to its degradation by the proteasome.

It is found in the cytoplasm. Its subcellular location is the nucleus. The catalysed reaction is a 2'-deoxyribonucleoside 5'-diphosphate + [thioredoxin]-disulfide + H2O = a ribonucleoside 5'-diphosphate + [thioredoxin]-dithiol. In terms of biological role, provides the precursors necessary for DNA synthesis. Catalyzes the biosynthesis of deoxyribonucleotides from the corresponding ribonucleotides. Inhibits Wnt signaling. The polypeptide is Ribonucleoside-diphosphate reductase subunit M2 (RRM2) (Mesocricetus auratus (Golden hamster)).